The sequence spans 345 residues: Ribonucleoside-diphosphate reductase small chain 2 (345 aa).

N-acetylmethionine is present on M1. The active site involves Y131. Residues S169 and S332 each carry the phosphoserine modification. T334 carries the phosphothreonine modification. S336 carries the post-translational modification Phosphoserine. K337 is covalently cross-linked (Glycyl lysine isopeptide (Lys-Gly) (interchain with G-Cter in ubiquitin)).

It belongs to the ribonucleoside diphosphate reductase small chain family. As to quaternary structure, heterotetramer of two large (R1) and two small (R2) subunits. S.cerevisiae has two different R1 subunits (RNR1 and RNR3) and two different R2 subunits (RNR2 and RNR4). The functional form of the small subunits is a RNR2-RNR4 heterodimer, where RNR2 provides the iron-radical center and RNR4 is required for proper folding of RNR2 and assembly with the large subunits. Under normal growth conditions, the active form of the large subunits is a homodimer of the constitutively expressed RNR1. In damaged cells or cells arrested for DNA synthesis, the reductase consists of multiple species because of the association of the small subunits (RNR2-RNR4) with either the RNR1 homodimer or a heterodimer of RNR1 and the damage-inducible RNR3. Interacts with DIF1.

Its subcellular location is the nucleus. The catalysed reaction is a 2'-deoxyribonucleoside 5'-diphosphate + [thioredoxin]-disulfide + H2O = a ribonucleoside 5'-diphosphate + [thioredoxin]-dithiol. Provides the precursors necessary for DNA synthesis. Catalyzes the biosynthesis of deoxyribonucleotides from the corresponding ribonucleotides. RNR4 is required for proper folding of RNR2 and assembly with the large subunits. The sequence is that of Ribonucleoside-diphosphate reductase small chain 2 (RNR4) from Saccharomyces cerevisiae (strain ATCC 204508 / S288c) (Baker's yeast).